Here is a 71-residue protein sequence, read N- to C-terminus: DNA gyrase inhibitor YacG (71 aa).

Zn(2+)-binding residues include Cys-8, Cys-11, Cys-27, and Cys-31. Residues 48 to 71 (VVEDDDLPPDAPGGESGGASGRLN) form a disordered region. Gly residues predominate over residues 61 to 71 (GESGGASGRLN).

It belongs to the DNA gyrase inhibitor YacG family. In terms of assembly, interacts with GyrB. Requires Zn(2+) as cofactor.

Functionally, inhibits all the catalytic activities of DNA gyrase by preventing its interaction with DNA. Acts by binding directly to the C-terminal domain of GyrB, which probably disrupts DNA binding by the gyrase. This chain is DNA gyrase inhibitor YacG, found in Ralstonia nicotianae (strain ATCC BAA-1114 / GMI1000) (Ralstonia solanacearum).